Reading from the N-terminus, the 669-residue chain is DNA ligase (669 aa).

NAD(+) contacts are provided by residues 34–38 (DAEYD), 83–84 (SL), and E114. K116 serves as the catalytic N6-AMP-lysine intermediate. Positions 137, 171, 287, and 311 each coordinate NAD(+). Residues C405, C408, C423, and C428 each coordinate Zn(2+). Residues 591 to 669 (NVESYFAGKT…EERFLQELNK (79 aa)) enclose the BRCT domain.

This sequence belongs to the NAD-dependent DNA ligase family. LigA subfamily. Mg(2+) serves as cofactor. It depends on Mn(2+) as a cofactor.

The enzyme catalyses NAD(+) + (deoxyribonucleotide)n-3'-hydroxyl + 5'-phospho-(deoxyribonucleotide)m = (deoxyribonucleotide)n+m + AMP + beta-nicotinamide D-nucleotide.. Its function is as follows. DNA ligase that catalyzes the formation of phosphodiester linkages between 5'-phosphoryl and 3'-hydroxyl groups in double-stranded DNA using NAD as a coenzyme and as the energy source for the reaction. It is essential for DNA replication and repair of damaged DNA. The protein is DNA ligase of Bacillus anthracis (strain A0248).